Consider the following 466-residue polypeptide: Adenosylhomocysteinase (466 aa).

The substrate site is built by Thr-57, Asp-132, and Glu-192. Residue 193–195 (TTT) coordinates NAD(+). Substrate is bound by residues Lys-222 and Asp-226. NAD(+) is bound by residues Asn-227, 256–261 (GYGDVG), Glu-279, Asn-314, 335–337 (IGH), and Asn-380.

This sequence belongs to the adenosylhomocysteinase family. NAD(+) is required as a cofactor.

It is found in the cytoplasm. It carries out the reaction S-adenosyl-L-homocysteine + H2O = L-homocysteine + adenosine. The protein operates within amino-acid biosynthesis; L-homocysteine biosynthesis; L-homocysteine from S-adenosyl-L-homocysteine: step 1/1. Functionally, may play a key role in the regulation of the intracellular concentration of adenosylhomocysteine. The protein is Adenosylhomocysteinase of Brucella anthropi (strain ATCC 49188 / DSM 6882 / CCUG 24695 / JCM 21032 / LMG 3331 / NBRC 15819 / NCTC 12168 / Alc 37) (Ochrobactrum anthropi).